An 834-amino-acid chain; its full sequence is RNA-binding protein 12B-B (834 aa).

The region spanning 154–229 is the RRM 1 domain; the sequence is PYLFLRGLPY…RFIEVMQGSE (76 aa). The interval 237–277 is disordered; that stretch reads GTATEGGDTPRMRSEEHSPSRRINGRHFRKRSHSKSPRARS. Over residues 244-255 the composition is skewed to basic and acidic residues; sequence DTPRMRSEEHSP. The segment covering 259–277 has biased composition (basic residues); it reads INGRHFRKRSHSKSPRARS. RRM domains follow at residues 283–359 and 401–478; these read FYVH…PVSR and LCIY…LISE. 2 disordered regions span residues 546-572 and 621-643; these read GYFR…PWEE and HFRR…RSRE. The segment covering 550 to 572 has biased composition (basic and acidic residues); that stretch reads QSDRCSPEDFRHSPEDYRHPWEE. Serine 701 is subject to Phosphoserine. Residues 758 to 834 enclose the RRM 4 domain; the sequence is IRVMISNLPF…GPRKVKLSLL (77 aa).

This chain is RNA-binding protein 12B-B (Rbm12b2), found in Mus musculus (Mouse).